We begin with the raw amino-acid sequence, 171 residues long: Orange carotenoid-binding domain-containing protein (171 aa).

Positions 21–171 (GDAVASTITV…ADMGVDPLAD (151 aa)) constitute an OCP N-terminal domain.

The protein belongs to the orange carotenoid-binding protein family. The cofactor is 3'-hydroxyechinenone.

It localises to the cellular thylakoid membrane. Its function is as follows. Might act as a photo-protectant, protecting against damage induced by excess light via a process known as non-photochemical quenching (NPQ). The chain is Orange carotenoid-binding domain-containing protein from Nostoc sp. (strain PCC 7120 / SAG 25.82 / UTEX 2576).